Here is a 139-residue protein sequence, read N- to C-terminus: Ubiquitin-conjugating enzyme spm2 (139 aa).

The UBC core domain occupies 5-139 (PRNFKLLEEL…PQPPEGSTFF (135 aa)).

This sequence belongs to the ubiquitin-conjugating enzyme family. As to quaternary structure, heterodimer with ubc13.

Its function is as follows. Has a role in the DNA error-free postreplication repair (PRR) pathway. Lacks catalytic activity by itself. The ubc13/spm2 heterodimer catalyzes the synthesis of non-canonical poly-ubiquitin chains that are linked through 'Lys-63'. In Schizosaccharomyces pombe (strain 972 / ATCC 24843) (Fission yeast), this protein is Ubiquitin-conjugating enzyme spm2 (spm2).